Consider the following 564-residue polypeptide: Potassium-transporting ATPase potassium-binding subunit (564 aa).

10 helical membrane-spanning segments follow: residues Y4–G24, T67–L87, L135–L155, L179–P199, F258–V278, A286–E306, A382–I402, L420–A440, L487–L507, and G533–L553.

The protein belongs to the KdpA family. In terms of assembly, the system is composed of three essential subunits: KdpA, KdpB and KdpC.

It localises to the cell inner membrane. Functionally, part of the high-affinity ATP-driven potassium transport (or Kdp) system, which catalyzes the hydrolysis of ATP coupled with the electrogenic transport of potassium into the cytoplasm. This subunit binds the periplasmic potassium ions and delivers the ions to the membrane domain of KdpB through an intramembrane tunnel. The sequence is that of Potassium-transporting ATPase potassium-binding subunit from Pseudomonas putida (strain ATCC 47054 / DSM 6125 / CFBP 8728 / NCIMB 11950 / KT2440).